We begin with the raw amino-acid sequence, 130 residues long: Small ribosomal subunit protein uS8 (130 aa).

This sequence belongs to the universal ribosomal protein uS8 family.

The protein is Small ribosomal subunit protein uS8 (RPS22) of Candida glabrata (strain ATCC 2001 / BCRC 20586 / JCM 3761 / NBRC 0622 / NRRL Y-65 / CBS 138) (Yeast).